The chain runs to 272 residues: Small ribosomal subunit biogenesis GTPase RsgA (272 aa).

The region spanning 56 to 207 (KNILIRPKVA…IIDTPGFSSI (152 aa)) is the CP-type G domain. Residues 105–108 (TKAD) and 151–159 (GQSGVGKTT) contribute to the GTP site. Residues Cys-230, Cys-235, His-237, and Cys-245 each coordinate Zn(2+).

The protein belongs to the TRAFAC class YlqF/YawG GTPase family. RsgA subfamily. In terms of assembly, monomer. Associates with 30S ribosomal subunit, binds 16S rRNA. The cofactor is Zn(2+).

Its subcellular location is the cytoplasm. In terms of biological role, one of several proteins that assist in the late maturation steps of the functional core of the 30S ribosomal subunit. Helps release RbfA from mature subunits. May play a role in the assembly of ribosomal proteins into the subunit. Circularly permuted GTPase that catalyzes slow GTP hydrolysis, GTPase activity is stimulated by the 30S ribosomal subunit. The polypeptide is Small ribosomal subunit biogenesis GTPase RsgA (Mycoplasmopsis pulmonis (strain UAB CTIP) (Mycoplasma pulmonis)).